The sequence spans 665 residues: ATPase WRNIP1 (665 aa).

A UBZ4-type zinc finger spans residues 17–44; it reads QVQCPVCQQMMPAAHINSHLDRCLLLHP. Residues Cys-20, Cys-23, His-31, His-35, and Cys-39 each coordinate Zn(2+). The tract at residues 48–190 is disordered; that stretch reads AEPAAGSHRA…DGEDDPGHWD (143 aa). Phosphoserine occurs at positions 65 and 75. A compositionally biased stretch (polar residues) spans 76-89; that stretch reads ESSALKQPATPTAA. Lys-81 participates in a covalent cross-link: Glycyl lysine isopeptide (Lys-Gly) (interchain with G-Cter in ubiquitin). At Thr-85 the chain carries Phosphothreonine. Ser-91 and Ser-92 each carry phosphoserine. Residues 92-104 are compositionally biased toward acidic residues; it reads SEGEGEEGDDGGE. Position 116 is a phosphothreonine (Thr-116). Over residues 130–155 the composition is skewed to low complexity; the sequence is RSSSPGRKGSGKRPAAAAAAGSASPR. The residue at position 139 (Ser-139) is a Phosphoserine. Residue Lys-141 forms a Glycyl lysine isopeptide (Lys-Gly) (interchain with G-Cter in ubiquitin) linkage. Ser-153 carries the phosphoserine modification. Acidic residues predominate over residues 159–184; that stretch reads EAEAQEEEEAVGDGDGDGDADADGED. Lys-225 is covalently cross-linked (Glycyl lysine isopeptide (Lys-Gly) (interchain with G-Cter in ubiquitin)). 270-276 is a binding site for ATP; that stretch reads PGCGKTT. Glycyl lysine isopeptide (Lys-Gly) (interchain with G-Cter in ubiquitin) cross-links involve residues Lys-301, Lys-310, Lys-316, Lys-322, and Lys-335. Residue Lys-482 forms a Glycyl lysine isopeptide (Lys-Gly) (interchain with G-Cter in SUMO2); alternate linkage. Lys-482 is covalently cross-linked (Glycyl lysine isopeptide (Lys-Gly) (interchain with G-Cter in ubiquitin); alternate). Phosphotyrosine occurs at positions 534 and 562. Lys-627 is covalently cross-linked (Glycyl lysine isopeptide (Lys-Gly) (interchain with G-Cter in ubiquitin)). A Glycyl lysine isopeptide (Lys-Gly) (interchain with G-Cter in ubiquitin); alternate cross-link involves residue Lys-633. Position 633 is an N6-acetyllysine; alternate (Lys-633). A Glycyl lysine isopeptide (Lys-Gly) (interchain with G-Cter in ubiquitin) cross-link involves residue Lys-636.

This sequence belongs to the AAA ATPase family. RarA/MGS1/WRNIP1 subfamily. Forms homooligomers, possibly octamers. Directly interacts with POLD1, POLD2 and POLD4. Interacts with the N-terminal domain of WRN. Interacts (via UBZ4-type zinc finger) with monoubiquitin and polyubiquitin. Interacts with TRIM14 and PPP6C; these interactions positively regulate the RIGI signaling pathway. Sumoylated with SUMO1 and SUMO2/3. In terms of tissue distribution, ubiquitously expressed.

The protein localises to the nucleus. Its subcellular location is the cytoplasm. The enzyme catalyses ATP + H2O = ADP + phosphate + H(+). Its function is as follows. Functions as a modulator of initiation or reinitiation events during DNA polymerase delta-mediated DNA synthesis. In the presence of ATP, stimulation of DNA polymerase delta-mediated DNA synthesis is decreased. Also plays a role in the innate immune defense against viruses. Stabilizes the RIGI dsRNA interaction and promotes RIGI 'Lys-63'-linked polyubiquitination. In turn, RIGI transmits the signal through mitochondrial MAVS. The protein is ATPase WRNIP1 of Homo sapiens (Human).